Reading from the N-terminus, the 457-residue chain is Aromatic amino acid transport protein AroP (457 aa).

Residues 1–19 (MMEGQQHGEQLKRGLKNRH) are Cytoplasmic-facing. A helical transmembrane segment spans residues 20-40 (IQLIALGGAIGTGLFLGSASV). The Periplasmic portion of the chain corresponds to 41–42 (IQ). A helical transmembrane segment spans residues 43–63 (SAGPGIILGYAIAGFIAFLIM). The Cytoplasmic segment spans residues 64–86 (RQLGEMVVEEPVAGSFSHFAYKY). The chain crosses the membrane as a helical span at residues 87–107 (WGSFAGFASGWNYWVLYVLVA). Residues 108–117 (MAELTAVGKY) are Periplasmic-facing. The helical transmembrane segment at 118–138 (IQFWYPEIPTWVSAAVFFVVI) threads the bilayer. The Cytoplasmic portion of the chain corresponds to 139-155 (NAINLTNVKVFGEMEFW). The helical transmembrane segment at 156–176 (FAIIKVIAVVAMIIFGGWLLF) threads the bilayer. Topologically, residues 177-201 (SGNGGPQASVSNLWDQGGFLPHGFT) are periplasmic. A helical membrane pass occupies residues 202-222 (GLVMMMAIIMFSFGGLELVGI). The Cytoplasmic segment spans residues 223–240 (TAAEADNPEQSIPKATNQ). A helical membrane pass occupies residues 241 to 261 (VIYRILIFYIGSLAVLLSLMP). At 262-271 (WTRVTADTSP) the chain is on the periplasmic side. Residues 272-292 (FVLIFHELGDTFVANALNIVV) traverse the membrane as a helical segment. Topologically, residues 293–333 (LTAALSVYNSCVYCNSRMLFGLAQQGNAPKALASVDKRGVP) are cytoplasmic. A helical membrane pass occupies residues 334–354 (VNTILVSALVTALCVLINYLA). Residues 355–358 (PESA) are Periplasmic-facing. Residues 359–379 (FGLLMALVVSALVINWAMISL) traverse the membrane as a helical segment. The Cytoplasmic portion of the chain corresponds to 380–399 (AHMKFRRAKQEQGVVTRFPA). A helical membrane pass occupies residues 400–420 (LLYPLGNWICLLFMAAVLVIM). The Periplasmic portion of the chain corresponds to 421-425 (LMTPG). Residues 426–446 (MAISVYLIPVWLIVLGIGYLF) form a helical membrane-spanning segment. Residues 447–457 (KEKTAKAVKAH) lie on the Cytoplasmic side of the membrane.

This sequence belongs to the amino acid-polyamine-organocation (APC) superfamily. Amino acid transporter (AAT) (TC 2.A.3.1) family.

It is found in the cell inner membrane. The catalysed reaction is L-phenylalanine(in) + H(+)(in) = L-phenylalanine(out) + H(+)(out). It catalyses the reaction L-tryptophan(in) + H(+)(in) = L-tryptophan(out) + H(+)(out). It carries out the reaction L-tyrosine(in) + H(+)(in) = L-tyrosine(out) + H(+)(out). Permease that is involved in the active transport across the cytoplasmic membrane of all three aromatic amino acids, phenylalanine, tyrosine and tryptophan. This is Aromatic amino acid transport protein AroP (aroP) from Shigella flexneri.